Here is a 333-residue protein sequence, read N- to C-terminus: Ornithine carbamoyltransferase (333 aa).

Carbamoyl phosphate contacts are provided by residues 56 to 59 (STRT), Arg-107, and 134 to 137 (HPTQ). Residues Asn-167, Asp-231, and 235–236 (SM) each bind L-ornithine. Carbamoyl phosphate-binding positions include 273–274 (CL) and Arg-318.

The protein belongs to the aspartate/ornithine carbamoyltransferase superfamily. OTCase family.

The protein localises to the cytoplasm. The catalysed reaction is carbamoyl phosphate + L-ornithine = L-citrulline + phosphate + H(+). The protein operates within amino-acid degradation; L-arginine degradation via ADI pathway; carbamoyl phosphate from L-arginine: step 2/2. Its function is as follows. Reversibly catalyzes the transfer of the carbamoyl group from carbamoyl phosphate (CP) to the N(epsilon) atom of ornithine (ORN) to produce L-citrulline. The polypeptide is Ornithine carbamoyltransferase (Clostridium botulinum (strain Kyoto / Type A2)).